The chain runs to 834 residues: Transcription intermediary factor 1-beta (834 aa).

Alanine 2 is subject to N-acetylalanine. The segment covering 13 to 23 (AATAASAASGS) has biased composition (low complexity). Residues 13 to 56 (AATAASAASGSPGSGEGSAGGEKRPAASSAAAASAAASSPAGGG) are disordered. Residues serine 23, serine 26, and serine 30 each carry the phosphoserine modification. Lysine 35 is covalently cross-linked (Glycyl lysine isopeptide (Lys-Gly) (interchain with G-Cter in SUMO2)). The segment covering 38–52 (AASSAAAASAAASSP) has biased composition (low complexity). Serine 51 bears the Phosphoserine mark. The RING-type zinc-finger motif lies at 66–122 (CGVCRERLRPERDPRLLPCLHSACSACLGPATPAAANNSGDGGSAGDGAMVDCPVCK). Lysine 128 is covalently cross-linked (Glycyl lysine isopeptide (Lys-Gly) (interchain with G-Cter in SUMO2)). Phosphoserine is present on serine 139. The B box-type 1 zinc finger occupies 149–196 (DANQCCTSCEDNAPATSYCVECSEPLCETCVEAHQRVKYTKDHTVRST). Positions 154, 157, 178, and 182 each coordinate Zn(2+). A Glycyl lysine isopeptide (Lys-Gly) (interchain with G-Cter in SUMO2) cross-link involves residue lysine 200. A B box-type 2 zinc finger spans residues 205–246 (ERTVYCNVHKHEPLVLFCESCDTLTCRDCQLNAHKDHQYQFL). Cysteine 210, histidine 213, cysteine 233, and histidine 238 together coordinate Zn(2+). The interval 247–377 (EDAVRNQRKL…LIYFQLHRAL (131 aa)) is leucine zipper alpha helical coiled-coil region. Residues 248 to 377 (DAVRNQRKLL…LIYFQLHRAL (130 aa)) are interaction with MAGEC2. Glycyl lysine isopeptide (Lys-Gly) (interchain with G-Cter in SUMO2) cross-links involve residues lysine 255 and lysine 262. Lysine 267 carries the post-translational modification N6-acetyllysine. Lysine 273 participates in a covalent cross-link: Glycyl lysine isopeptide (Lys-Gly) (interchain with G-Cter in SUMO2). Lysine 305 is subject to N6-acetyllysine; alternate. Residue lysine 305 forms a Glycyl lysine isopeptide (Lys-Gly) (interchain with G-Cter in SUMO2); alternate linkage. Lysine 320 participates in a covalent cross-link: Glycyl lysine isopeptide (Lys-Gly) (interchain with G-Cter in SUMO2). Residue lysine 341 is modified to N6-acetyllysine. A Glycyl lysine isopeptide (Lys-Gly) (interchain with G-Cter in SUMO2) cross-link involves residue lysine 367. An involved in binding PPP1CA region spans residues 367-371 (KLIYF). Lysine 378 carries the post-translational modification N6-acetyllysine; alternate. Lysine 378 is covalently cross-linked (Glycyl lysine isopeptide (Lys-Gly) (interchain with G-Cter in SUMO2); alternate). A Glycyl lysine isopeptide (Lys-Gly) (interchain with G-Cter in SUMO1); alternate cross-link involves residue lysine 378. Lysine 408 is covalently cross-linked (Glycyl lysine isopeptide (Lys-Gly) (interchain with G-Cter in SUMO2)). The segment at 412–480 (ERPGTNSTGP…SRSGEGEVSG (69 aa)) is disordered. Serine 418 carries the phosphoserine modification. A Glycyl lysine isopeptide (Lys-Gly) (interchain with G-Cter in SUMO2) cross-link involves residue lysine 435. The span at 435–444 (KQGSGSSQPM) shows a compositional bias: polar residues. Phosphoserine is present on residues serine 438, serine 440, and serine 454. A Glycyl lysine isopeptide (Lys-Gly) (interchain with G-Cter in SUMO2); alternate cross-link involves residue lysine 469. A Glycyl lysine isopeptide (Lys-Gly) (interchain with G-Cter in SUMO1); alternate cross-link involves residue lysine 469. Arginine 470 carries the post-translational modification Citrulline. Serine 471 bears the Phosphoserine mark. At arginine 472 the chain carries Citrulline. A phosphoserine mark is found at serine 473, serine 479, and serine 489. The tract at residues 476-513 (GEVSGLLRKVPRVSLERLDLDLTSDSQPPVFKVFPGST) is HP1 box. The short motif at 481-494 (LLRKVPRVSLERLD) is the PxVxL motif element. A Phosphothreonine modification is found at threonine 498. At serine 501 the chain carries Phosphoserine. A Glycyl lysine isopeptide (Lys-Gly) (interchain with G-Cter in SUMO2) cross-link involves residue lysine 507. Residue lysine 554 forms a Glycyl lysine isopeptide (Lys-Gly) (interchain with G-Cter in SUMO2); alternate linkage. Lysine 554 is covalently cross-linked (Glycyl lysine isopeptide (Lys-Gly) (interchain with G-Cter in SUMO); alternate). A Glycyl lysine isopeptide (Lys-Gly) (interchain with G-Cter in SUMO2) cross-link involves residue lysine 575. The disordered stretch occupies residues 581-602 (LTEGPGAEGPRLASPSGSTSSG). Serine 594 carries the post-translational modification Phosphoserine. Residues 625–672 (ATICRVCQKPGDLVMCNQCEFCFHLDCHLPALQDVPGEEWSCSLCHVL) form a PHD-type zinc finger. Lysine 676 is covalently cross-linked (Glycyl lysine isopeptide (Lys-Gly) (interchain with G-Cter in SUMO)). A phosphoserine mark is found at serine 683, serine 689, and serine 697. One can recognise a Bromo domain in the interval 695–799 (KLSPANQRKC…RFFETRMNDA (105 aa)). Lysine 750 is covalently cross-linked (Glycyl lysine isopeptide (Lys-Gly) (interchain with G-Cter in SUMO2); alternate). Lysine 750 participates in a covalent cross-link: Glycyl lysine isopeptide (Lys-Gly) (interchain with G-Cter in SUMO1); alternate. Lysine 750 is covalently cross-linked (Glycyl lysine isopeptide (Lys-Gly) (interchain with G-Cter in SUMO); alternate). Phosphoserine is present on serine 752. A Phosphotyrosine modification is found at tyrosine 755. Serine 757 bears the Phosphoserine mark. N6-acetyllysine; alternate is present on residues lysine 770, lysine 774, and lysine 779. Glycyl lysine isopeptide (Lys-Gly) (interchain with G-Cter in SUMO2); alternate cross-links involve residues lysine 770, lysine 774, and lysine 779. Lysine 779 is covalently cross-linked (Glycyl lysine isopeptide (Lys-Gly) (interchain with G-Cter in SUMO1); alternate). A Phosphoserine modification is found at serine 784. Lysine 804 is covalently cross-linked (Glycyl lysine isopeptide (Lys-Gly) (interchain with G-Cter in SUMO2)). Serine 824 bears the Phosphoserine; by ATM and ATR and dsDNA kinase mark.

It belongs to the TRIM/RBCC family. Oligomer; the RBCC domain homotrimerizes and interacts with one molecule of KRAB to form the KRAB-KAP1 corepressor complex. Interacts with SETX. Binding to a KRAB domain is an absolute requirement for silencing gene expression. Interacts with a number of KRAB-ZFP proteins including ZNF10, ZFP53, ZFP68, ZNF382 and ZNF256. Interacts with NCOR1, NR3C1 and CHD3. Interacts with CEBPB (via the RING-type and PHD-type zinc fingers). Interacts with CBX5 (via the PxVxL motif); the interaction occurs in interphase nuclei and competes for binding POGZ. Interacts with POGZ; the interaction competes for interaction with CBX5. Interacts with SETDB1; the interaction is enhanced by KAP1 sumoylation, stimulates SETDB1 histone methyltransferase activity and gene silencing. Interacts (via the PHD-type zinc finger) with UBE2I; the interaction is required for sumoylation and repressor activity. Component of the TRIM28/KAP1-ERBB4-MDM2 complex involved in connecting growth factor and DNA damage responses. Interacts directly with ERBB4; the interaction represses ERBB4-mediated transcription activity. Interacts with MDM2; the interaction contributes to p53/TP53 inactivation. Component of the TRIM28/KAP1-MDM2-p53/TP53; involved in regulating p53/TP53 stabilization and activity. Interacts (via the leucine zipper alpha helical coiled-coil) with E2F1 (central region); the interaction inhibits E2F1 acetylation and transcriptional activity. Interacts with PPP1CA; the interaction dephosphorylates TRIM28 at Ser-824 and forms a complex at the p21 promoter site. Interacts with PPP1CB; the interaction is weak but is increased on dephosphorylation at Ser-824. Interacts with CEBPB and NR3C1. Interacts with CBX5 (via the PxVxL motif); the interaction occurs in interphase nuclei and competes for binding POGZ. Component of a ternary complex that includes TRIM28, a HP1 protein (CBX1, CBX3 OR CBX5), a KRAB domain-containing protein, and DNA. Interacts with SMARCAD1. Interacts with, and sumoylates IRF7. Interacts with MAGEC2. Part of a complex composed of TRIM28, HDAC1, HDAC2 and EHMT2. Interacts (via the RBCC domain) with KOX1 (via the KRAB domain), ZNF268 (via the KRAB domain) and ZNF300 (via the KRAB domain); the interactions increase KOX1, ZNF268 and ZNF300 nuclear localization activities. Interacts with AICDA. The large PER complex involved in the histone methylation is composed of at least PER2, CBX3, TRIM28, SUV39H1 and/or SUV39H2; CBX3 mediates the formation of the complex. Interacts with NR4A3; the interactions potentiates NR4A3 activity on NurRE promoter. Interacts (unphosphorylated or phosphorylated form) with ZBTB1 (via BTB domain). Probably part of a corepressor complex containing ZNF304, TRIM28, SETDB1 and DNMT1. Interacts with ATRX. Forms a complex with ATRX, SETDB1 and ZNF274. Interacts with ZFP568; the interaction mediates ZFP568 transcriptional repression activity. Interacts with RRP1B. Interacts with CRY1. Interacts with ZNF263; recruited to the SIX3 promoter along with other proteins involved in chromatin modification and transcriptional corepression where it contributes to transcriptional repression. Interacts with CYREN (via XLF motif). Interacts with TRIM17; this interaction prevents TRIM28 activity. Interacts with ZNF746. Interacts with PHF13. Interacts with ZNF354C. Interacts with ZNF432; the interaction is independent of PARP1. In terms of processing, ATM-induced phosphorylation on Ser-824 represses sumoylation leading to the de-repression of expression of a subset of genes involved in cell cycle control and apoptosis in response to genotoxic stress. Dephosphorylation by the phosphatases, PPP1CA and PP1CB forms, allows sumoylation and expression of TRIM28 target genes. Sumoylation/desumoylation events regulate TRIM28-mediated transcriptional repression. Sumoylation is required for interaction with CHD3 and SETDB1 and the corepressor activity. Represses and is repressed by Ser-824 phosphorylation. Enhances the TRIM28 corepressor activity, inhibiting transcriptional activity of a number of genes including GADD45A and CDKN1A/p21. Lys-554, Lys-779 and Lys-804 are the major sites of sumoylation. In response to Dox-induced DNA damage, enhanced phosphorylation on Ser-824 prevents sumoylation and allows de-repression of CDKN1A/p21. Post-translationally, auto-ubiquitinated; enhanced by MAGEA2 and MAGEC2. In terms of processing, citrullinated by PADI4. ADP-ribosylated by SIRT6, promoting TRIM28/KAP1 interaction with CBX5, thereby contributing to the packaging of LINE-1 retrotransposon elements into transcriptionally repressive heterochromatin.

Its subcellular location is the nucleus. The catalysed reaction is S-ubiquitinyl-[E2 ubiquitin-conjugating enzyme]-L-cysteine + [acceptor protein]-L-lysine = [E2 ubiquitin-conjugating enzyme]-L-cysteine + N(6)-ubiquitinyl-[acceptor protein]-L-lysine.. It participates in protein modification; protein sumoylation. Its function is as follows. Nuclear corepressor for KRAB domain-containing zinc finger proteins (KRAB-ZFPs). Mediates gene silencing by recruiting CHD3, a subunit of the nucleosome remodeling and deacetylation (NuRD) complex, and SETDB1 (which specifically methylates histone H3 at 'Lys-9' (H3K9me)) to the promoter regions of KRAB target genes. Enhances transcriptional repression by coordinating the increase in H3K9me, the decrease in histone H3 'Lys-9 and 'Lys-14' acetylation (H3K9ac and H3K14ac, respectively) and the disposition of HP1 proteins to silence gene expression. Recruitment of SETDB1 induces heterochromatinization. May play a role as a coactivator for CEBPB and NR3C1 in the transcriptional activation of ORM1. Also a corepressor for ERBB4. Inhibits E2F1 activity by stimulating E2F1-HDAC1 complex formation and inhibiting E2F1 acetylation. May serve as a partial backup to prevent E2F1-mediated apoptosis in the absence of RB1. Important regulator of CDKN1A/p21(CIP1). Has E3 SUMO-protein ligase activity toward itself via its PHD-type zinc finger. Specifically sumoylates IRF7, thereby inhibiting its transactivation activity. Ubiquitinates p53/TP53 leading to its proteasomal degradation; the function is enhanced by MAGEC2 and MAGEA2, and possibly MAGEA3 and MAGEA6. Mediates the nuclear localization of KOX1, ZNF268 and ZNF300 transcription factors. Probably forms a corepressor complex required for activated KRAS-mediated promoter hypermethylation and transcriptional silencing of tumor suppressor genes (TSGs) or other tumor-related genes in colorectal cancer (CRC) cells. Required to maintain a transcriptionally repressive state of genes in undifferentiated embryonic stem cells (ESCs). In ESCs, in collaboration with SETDB1, is also required for H3K9me3 and silencing of endogenous and introduced retroviruses in a DNA-methylation independent-pathway. Associates at promoter regions of tumor suppressor genes (TSGs) leading to their gene silencing. The SETDB1-TRIM28-ZNF274 complex may play a role in recruiting ATRX to the 3'-exons of zinc-finger coding genes with atypical chromatin signatures to establish or maintain/protect H3K9me3 at these transcriptionally active regions. Acts as a corepressor for ZFP568. This is Transcription intermediary factor 1-beta from Mus musculus (Mouse).